The primary structure comprises 138 residues: Thyrotropin subunit beta (138 aa).

The first 20 residues, 1–20 (MSAAVLLSVLFALACGQAAS), serve as a signal peptide directing secretion. Intrachain disulfides connect Cys22-Cys72, Cys36-Cys87, Cys39-Cys125, Cys47-Cys103, Cys51-Cys105, and Cys108-Cys115. Asn43 carries an N-linked (GlcNAc...) asparagine glycan. Residues 133–138 (LGGFSV) constitute a propeptide that is removed on maturation.

Belongs to the glycoprotein hormones subunit beta family. Heterodimer of a common alpha chain and a unique beta chain which confers biological specificity to thyrotropin, lutropin, follitropin and gonadotropin.

It is found in the secreted. In terms of biological role, indispensable for the control of thyroid structure and metabolism. The polypeptide is Thyrotropin subunit beta (Tshb) (Mus musculus (Mouse)).